A 260-amino-acid chain; its full sequence is MTDISVQSNTALESSETTHFGFTTVAKEEKVAKVAQVFHSVAAKYDIMNDLMSGGIHRLWKRFTIDCSGARPGQRVLDLGGGTGDLTAKFSRIVGEKGHVILADINNSMLNVGRDKLRDSGIVGNVHYVQANAEELPFPDDYFDIITISFCLRNVTDKDKALRSMFRVLKPGGRLLVLEFSKPVFDPLSKVYDAYSFHLLPKMGELVANDADSYRYLAESIRMHPDQETLKGMMQEAGFENTSYYNLTGGIVALHRGYKF.

S-adenosyl-L-methionine-binding positions include Thr83, Asp104, 132–133 (NA), and Ser149.

It belongs to the class I-like SAM-binding methyltransferase superfamily. MenG/UbiE family.

It carries out the reaction a 2-demethylmenaquinol + S-adenosyl-L-methionine = a menaquinol + S-adenosyl-L-homocysteine + H(+). The enzyme catalyses a 2-methoxy-6-(all-trans-polyprenyl)benzene-1,4-diol + S-adenosyl-L-methionine = a 5-methoxy-2-methyl-3-(all-trans-polyprenyl)benzene-1,4-diol + S-adenosyl-L-homocysteine + H(+). It functions in the pathway quinol/quinone metabolism; menaquinone biosynthesis; menaquinol from 1,4-dihydroxy-2-naphthoate: step 2/2. Its pathway is cofactor biosynthesis; ubiquinone biosynthesis. In terms of biological role, methyltransferase required for the conversion of demethylmenaquinol (DMKH2) to menaquinol (MKH2) and the conversion of 2-polyprenyl-6-methoxy-1,4-benzoquinol (DDMQH2) to 2-polyprenyl-3-methyl-6-methoxy-1,4-benzoquinol (DMQH2). In Vibrio vulnificus (strain CMCP6), this protein is Ubiquinone/menaquinone biosynthesis C-methyltransferase UbiE.